Here is an 870-residue protein sequence, read N- to C-terminus: MSDGNMDVDESPVSWKVKSLEKLIDGSSFSSTLSRLSSSSRLIPTSRDFHFYYNFDEFKRPIDEITGTSQSTLATIGDSEQVWGKSMKFPGDVDDVYAEDWLCNVNDELIERFDVSVDEFQRIRKKEKEIGRSVVADDGDDGFQMVYGKKKKPVGNVVTGSAAVNGGGSVIDVKMAERDKNSSGKAKVPFHVPTIKKPQEEYNILVNNANLPFEHVWLERSEDDLRAMHPLEKFSVLDFVDKDVNEMEPVKPLPLEQTPFKFVQEVKDLKELVAKLRSVEEFAVDLEHNQYRSFQGLTCLMQISTRTEDYIVDTFKLRIHIGPYLREIFKDPKKKKVMHGADRDIIWLQRDFGIYVCNLFDTGQASRVLNLERNSLEFLLQHFCGVTANKEYQNADWRIRPLPEEMTRYAREDTHYLLYIYDLIKLELQRMAKDDAHTDSPLLEVYKRSYDVCTQLYEKELLTENSYLHVYGLQAAGFNAAQLAIVAGLCEWRDFIARAEDESTGYVLPNKVLLEIAKEMPDSVGKLRRMLKSKHPYIERNVDSVVSVIRQSMQHYAAFESAALSLKDVSPGNVMDKNIEPISEKKDLHTGDVASPSLKENSSQLESTRDLIMGAANTNEGRGLGSGLFGSAKVSAAVRISKKPSSGLGALLGNAASKKKSRTDEKVKEDVKLEQIRSSVNLSFHSFTEKVPDSKSTSETSPKVYGKPEEMSSTMPASVSKEDGVKELKDDSEEASEIVGTSGRVSESKVSSSEMGDIILLENGDEKKVDAEDEPMSLSELSTNFQKCFKSMNKSKKAQKQTEFLNIEPFDYEAARKEVKFGEGHKGRQGKREAAAGQKKGSTQEQSEFGQGKRRQAFPASGNRSMSFKN.

A 3'-5' exonuclease domain is found at 263–428; sequence VQEVKDLKEL…YIYDLIKLEL (166 aa). Residues 479–559 form the HRDC domain; it reads NAAQLAIVAG…RQSMQHYAAF (81 aa). 4 disordered regions span residues 583-605, 649-668, 688-775, and 821-870; these read SEKK…SSQL, GALL…EKVK, TEKV…EDEP, and FGEG…SFKN. Composition is skewed to basic and acidic residues over residues 720-729 and 821-834; these read SKEDGVKELK and FGEG…KREA. Residues 840 to 849 show a composition bias toward polar residues; that stretch reads KGSTQEQSEF.

It localises to the nucleus. It is found in the nucleolus. The protein localises to the cytoplasm. Functionally, acts as an important epigenetic regulator through multiple silencing mechanisms. Involved in association with RRP6L1 in the silencing of the solo LTR locus. Controls levels of non-coding RNAs (ncRNAs) from the solo LTR locus. Seems to function independently of the RNA-mediated gene silencing (RdDM) pathway. Functions redundantly with RRP6L1 in the regulation of FLC locus. Participates in the maintenance of trimethylated 'Lys-27' (H3K27me3) at FLC locus via the regulation of antisense long non-coding RNAs (lncRNAs) and the regulation of diverse antisense RNAs derived from the FLC locus. Seems not involved in the exosomal RNA degradation. May be involved in poly(A)-mediated RNA degradation. This is Protein RRP6-like 2 from Arabidopsis thaliana (Mouse-ear cress).